Reading from the N-terminus, the 223-residue chain is Putative NAD(P)H nitroreductase SAB2397c (223 aa).

The protein belongs to the nitroreductase family. FMN is required as a cofactor.

The sequence is that of Putative NAD(P)H nitroreductase SAB2397c from Staphylococcus aureus (strain bovine RF122 / ET3-1).